A 415-amino-acid chain; its full sequence is Gamma-glutamyl phosphate reductase (415 aa).

It belongs to the gamma-glutamyl phosphate reductase family.

The protein resides in the cytoplasm. The enzyme catalyses L-glutamate 5-semialdehyde + phosphate + NADP(+) = L-glutamyl 5-phosphate + NADPH + H(+). Its pathway is amino-acid biosynthesis; L-proline biosynthesis; L-glutamate 5-semialdehyde from L-glutamate: step 2/2. Its function is as follows. Catalyzes the NADPH-dependent reduction of L-glutamate 5-phosphate into L-glutamate 5-semialdehyde and phosphate. The product spontaneously undergoes cyclization to form 1-pyrroline-5-carboxylate. This Mycobacterium bovis (strain BCG / Pasteur 1173P2) protein is Gamma-glutamyl phosphate reductase.